Here is a 176-residue protein sequence, read N- to C-terminus: Ribosome maturation factor RimM (176 aa).

A PRC barrel domain is found at 97–176; sequence GDEFYWRELV…TIQVDWDPSF (80 aa).

This sequence belongs to the RimM family. In terms of assembly, binds ribosomal protein uS19.

It is found in the cytoplasm. Its function is as follows. An accessory protein needed during the final step in the assembly of 30S ribosomal subunit, possibly for assembly of the head region. Essential for efficient processing of 16S rRNA. May be needed both before and after RbfA during the maturation of 16S rRNA. It has affinity for free ribosomal 30S subunits but not for 70S ribosomes. This is Ribosome maturation factor RimM from Pseudoalteromonas atlantica (strain T6c / ATCC BAA-1087).